The following is a 259-amino-acid chain: Tryptophan synthase alpha chain (259 aa).

Residues Glu-52 and Asp-63 each act as proton acceptor in the active site.

It belongs to the TrpA family. As to quaternary structure, tetramer of two alpha and two beta chains.

It carries out the reaction (1S,2R)-1-C-(indol-3-yl)glycerol 3-phosphate + L-serine = D-glyceraldehyde 3-phosphate + L-tryptophan + H2O. It functions in the pathway amino-acid biosynthesis; L-tryptophan biosynthesis; L-tryptophan from chorismate: step 5/5. Its function is as follows. The alpha subunit is responsible for the aldol cleavage of indoleglycerol phosphate to indole and glyceraldehyde 3-phosphate. The protein is Tryptophan synthase alpha chain of Streptococcus gordonii (strain Challis / ATCC 35105 / BCRC 15272 / CH1 / DL1 / V288).